The chain runs to 305 residues: tRNA uridine(34) hydroxylase (305 aa).

The Rhodanese domain maps to 125–219 (ADENTVVVDT…YLEEVPREQS (95 aa)). C179 functions as the Cysteine persulfide intermediate in the catalytic mechanism.

It belongs to the TrhO family.

The enzyme catalyses uridine(34) in tRNA + AH2 + O2 = 5-hydroxyuridine(34) in tRNA + A + H2O. Functionally, catalyzes oxygen-dependent 5-hydroxyuridine (ho5U) modification at position 34 in tRNAs. In Brucella canis (strain ATCC 23365 / NCTC 10854 / RM-666), this protein is tRNA uridine(34) hydroxylase.